A 600-amino-acid polypeptide reads, in one-letter code: Proton channel OTOP1 (600 aa).

Residues 1 to 50 (MPGGPGAPSSPAASSGSSRAAPSGIAACPLSPPPLARGSPQASGPRRGAS) are disordered. The Cytoplasmic segment spans residues 1–56 (MPGGPGAPSSPAASSGSSRAAPSGIAACPLSPPPLARGSPQASGPRRGASVPQKLA). Over residues 7 to 27 (APSSPAASSGSSRAAPSGIAA) the composition is skewed to low complexity. The helical transmembrane segment at 57–78 (ETLSSQYGLNVFVAGLLFLLAW) threads the bilayer. Residues 79–86 (AVHATGVG) are Extracellular-facing. A helical membrane pass occupies residues 87–110 (KSDLLCVLTALMLLQLLWMLWYVG). The Cytoplasmic portion of the chain corresponds to 111–128 (RSYMQRRLIRPKDTHAGA). The chain crosses the membrane as a helical span at residues 129–151 (RWLRGSITLFAFITVVLGCLKVA). The Extracellular portion of the chain corresponds to 152–161 (YFIGFSECLS). The helical transmembrane segment at 162–186 (ATEGVFPVTHAVHTLLQVYFLWGHA) threads the bilayer. Residues 187-194 (KDIIMSFK) lie on the Cytoplasmic side of the membrane. The chain crosses the membrane as a helical span at residues 195–217 (TLERFGVIHSVFTNLLLWANSVL). Over 218–262 (NESKHQLNEHKERLITLGFGNITIVLDDHTPQCNCTPPALCSALS) the chain is Extracellular. The helical transmembrane segment at 263 to 288 (HGIYYLYPFNIEYQILASTMLYVLWK) threads the bilayer. Residues 289 to 309 (NIGRRVDSSQHQKMQCRFDGV) lie on the Cytoplasmic side of the membrane. A helical transmembrane segment spans residues 310-332 (LVGSVLGLTVLAATIAVVVVYMI). At 333–342 (HIGRSKSKSE) the chain is on the extracellular side. Residues 343 to 368 (SALIMFYLYAITVLLLMGAAGLVGSW) traverse the membrane as a helical segment. Residues 369–386 (IYRVDEKSLDESKNPARK) lie on the Cytoplasmic side of the membrane. Residues 387 to 411 (LDVDLLVATGSGSWLLSWGSILAIA) form a helical membrane-spanning segment. Topologically, residues 412–421 (CAETRPPYTW) are extracellular. A helical transmembrane segment spans residues 422 to 442 (YNLPYSVLVIVEKYVQNIFII). Residues 443–532 (ESVHLEPEGV…QGGMKRRLLR (90 aa)) are Cytoplasmic-facing. The helical transmembrane segment at 533 to 551 (NITAFLFLCNISLWIPPAF) threads the bilayer. At 552-569 (GCRPEYDNGLEEIVFGFE) the chain is on the extracellular side. A helical transmembrane segment spans residues 570–593 (PWIIVVNLAMPFSIFYRMHAAAAL). The Cytoplasmic segment spans residues 594 to 600 (FEVYCKI).

The protein belongs to the otopetrin family. As to quaternary structure, homodimer. Interacts with STAT1, independently of STAT1 phosphorylation status. As to expression, expressed in thymus, heart, kidney, skin, vestibular system of the inner ear, sour taste cells, heart, uterus, dorsal root ganglion, adrenal gland, lactating mammary gland and stimulated mast cells. In the inner ear, expressed in the supporting cells in extrastriolar regions of the saccule and in the utricle, but not in the cochlea. Expressed in brown adipose tissue. Expressed in epididymal white adipose tissue (eWAT), as well as in inguinal fat, in obese animals, but hardly detectable in eWAT from lean mice. Expressed in acid-sensing taste receptor cells (PKD2L1-positive cells), but not in other types of taste cells (at protein level).

The protein resides in the cell membrane. Its subcellular location is the cell projection. It localises to the microvillus. The enzyme catalyses H(+)(in) = H(+)(out). With respect to regulation, activated by both acid and alkali, with proton influx in response to extracellular acid and proton efflux during alkali stimulation. Inhibited by Zn(2+); this inhibition is thought to be pH-sensitive. Currents evoked in response to mild acid (pH 6.0) stimulus may also be mildly potentiated by exposure to Zn(2+). Activated by NH(4)Cl. In terms of biological role, proton-selective ion channel. Biphasically modulated by acid and alkali, mediating proton influx and efflux in response to extracellular acid and base stimulation, respectively. Sour taste receptor, which carries inward currents in response to extracellular acidification. Sensor for ammonium chloride (NH(4)Cl) in taste receptor cells. NH(4)Cl acts by increasing the intracellular pH, thereby generating a driving force for proton entry through OTOP1 channel. Might also participate in alkaline sensation. Plays a role in the regulation of Ca(2+) flux in response to purigenic (ATP, ADP and UDP) stimuli, leading to increase in cytosolic Ca(2+) due to influx of extracellular calcium. May play this role by inhibiting P2Y purinoceptor-mediated Ca(2+) release in a Ca(2+)-dependent manner and promote an influx of Ca(2+) in response to ATP. Through this mechanism and possibly others, plays a role in the formation and function of calcium carbonate-based structures in the vestibular system of the inner ear, called otoconia, that sense gravity and linear acceleration. In obesity, may attenuate adipose tissue inflammation, through the negative regulation of IFNG signaling, hence may play an adaptive role in the maintainance of metabolic homeostasis. Following alkali activation, may also be permeable Na(+), K(+), Cs(+) and Li(+). This Mus musculus (Mouse) protein is Proton channel OTOP1.